A 212-amino-acid chain; its full sequence is Nucleoside diphosphate kinase homolog 5 (212 aa).

An NDK region spans residues 13–145; that stretch reads EKTLAIIKPD…EREIRFMFPE (133 aa).

It belongs to the NDK family. As to quaternary structure, component of the axonemal radial spoke complex 1 (RS1), at least composed of spoke head proteins RSPH1, RSPH3, RSPH9 and the cilia-specific component RSPH4A or sperm-specific component RSPH6A, spoke stalk proteins RSPH14, DNAJB13, DYDC1, ROPN1L and NME5, and the anchor protein IQUB. Interacts with IQUB. Specifically expressed in testis germinal cells.

The protein localises to the cell projection. The protein resides in the cilium. It localises to the cytoplasm. Its subcellular location is the cytoskeleton. It is found in the flagellum axoneme. In terms of biological role, functions as part of axonemal radial spoke complexes that play an important part in the motility of sperm and cilia. Does not seem to have nucleoside diphosphate kinase (NDPK) activity. Confers protection from cell death by BAX and alters the cellular levels of several antioxidant enzymes including GPX5. May play a role in spermiogenesis by increasing the ability of late-stage spermatids to eliminate reactive oxygen species. Exhibits a 3'-5' exonuclease activity with a preference for single-stranded DNA, suggesting roles in DNA proofreading and repair. The protein is Nucleoside diphosphate kinase homolog 5 of Homo sapiens (Human).